Reading from the N-terminus, the 155-residue chain is 6,7-dimethyl-8-ribityllumazine synthase (155 aa).

5-amino-6-(D-ribitylamino)uracil is bound by residues Phe23, 57–59, and 81–83; these read AFE and AVI. Position 86–87 (86–87) interacts with (2S)-2-hydroxy-3-oxobutyl phosphate; the sequence is ST. His89 functions as the Proton donor in the catalytic mechanism. Phe114 is a 5-amino-6-(D-ribitylamino)uracil binding site. Residue Arg128 participates in (2S)-2-hydroxy-3-oxobutyl phosphate binding.

The protein belongs to the DMRL synthase family.

It catalyses the reaction (2S)-2-hydroxy-3-oxobutyl phosphate + 5-amino-6-(D-ribitylamino)uracil = 6,7-dimethyl-8-(1-D-ribityl)lumazine + phosphate + 2 H2O + H(+). The protein operates within cofactor biosynthesis; riboflavin biosynthesis; riboflavin from 2-hydroxy-3-oxobutyl phosphate and 5-amino-6-(D-ribitylamino)uracil: step 1/2. Functionally, catalyzes the formation of 6,7-dimethyl-8-ribityllumazine by condensation of 5-amino-6-(D-ribitylamino)uracil with 3,4-dihydroxy-2-butanone 4-phosphate. This is the penultimate step in the biosynthesis of riboflavin. This is 6,7-dimethyl-8-ribityllumazine synthase from Desulfatibacillum aliphaticivorans.